The following is a 342-amino-acid chain: UDP-3-O-acylglucosamine N-acyltransferase (342 aa).

The Proton acceptor role is filled by H243.

It belongs to the transferase hexapeptide repeat family. LpxD subfamily. In terms of assembly, homotrimer.

The catalysed reaction is a UDP-3-O-[(3R)-3-hydroxyacyl]-alpha-D-glucosamine + a (3R)-hydroxyacyl-[ACP] = a UDP-2-N,3-O-bis[(3R)-3-hydroxyacyl]-alpha-D-glucosamine + holo-[ACP] + H(+). Its pathway is bacterial outer membrane biogenesis; LPS lipid A biosynthesis. In terms of biological role, catalyzes the N-acylation of UDP-3-O-acylglucosamine using 3-hydroxyacyl-ACP as the acyl donor. Is involved in the biosynthesis of lipid A, a phosphorylated glycolipid that anchors the lipopolysaccharide to the outer membrane of the cell. The sequence is that of UDP-3-O-acylglucosamine N-acyltransferase from Coxiella burnetii (strain CbuK_Q154) (Coxiella burnetii (strain Q154)).